A 388-amino-acid chain; its full sequence is Dauer abnormal formation protein 25 (388 aa).

ANK repeat units lie at residues 40–69, 74–103, and 107–137; these read SGMSVLAAAAYRGNLTLVEKAIELKCDVND, TLYTPLMFAALSGKQDVCRLLMDSGARMYL, and IGKTASELAAFVGHHECVAIINNHITIDVIE. Zn(2+) is bound by residues Cys321, Cys324, Cys333, Cys336, Cys341, Cys345, His353, and Cys357. Residues 321–357 form an MYND-type zinc finger; that stretch reads CSVCGHPGAKKRCTQCKLAYCSQECQKFDWPIHKKVC.

In terms of tissue distribution, expressed in many ciliated sensory neurons.

Its subcellular location is the cell projection. It is found in the cilium. Its function is as follows. May be involved in the trafficking and dendritic transport of signaling proteins, such as the receptor-type guanylate cyclases gcy-12 and daf-11, to the cilia. In ciliated sensory neurons, required for the calcium flux to the cytoplasm in response to onset and removal of a nitric oxide (NO) stimulus and is thereby required for the behavioral avoidance response to NO-producing organisms like P.aeruginosa. The polypeptide is Dauer abnormal formation protein 25 (daf-25) (Caenorhabditis elegans).